Consider the following 748-residue polypeptide: Cytosolic phospholipase A2 (748 aa).

The phospholipid binding stretch occupies residues 1-178 (MSFIDPYQHI…MKSFLGEENS (178 aa)). Residues 6 to 124 (PYQHIVVEHQ…GEKKEVQLTF (119 aa)) form the C2 domain. Ca(2+) is bound by residues aspartate 40, threonine 41, aspartate 43, asparagine 65, aspartate 93, alanine 94, and asparagine 95. The PLA2c domain occupies 138–740 (VCSSTDLRFS…SSVEARRFFN (603 aa)). The active-site Nucleophile is serine 228. The interval 431–459 (SNDSSDSEDESQHPKGTENSEANEEYQNS) is disordered. Residues 449–459 (NSEANEEYQNS) are compositionally biased toward polar residues. At serine 505 the chain carries Phosphoserine; by MAPK. Catalysis depends on aspartate 549, which acts as the Proton acceptor.

In terms of processing, activated by phosphorylation on a serine residue.

It is found in the cytoplasm. It localises to the cytoplasmic vesicle. It catalyses the reaction a 1,2-diacyl-sn-glycero-3-phosphocholine + H2O = a 1-acyl-sn-glycero-3-phosphocholine + a fatty acid + H(+). It carries out the reaction a 1-acyl-sn-glycero-3-phosphocholine + H2O = sn-glycerol 3-phosphocholine + a fatty acid + H(+). Its activity is regulated as follows. Stimulated by agonists such as ATP, EGF, thrombin and bradykinin as well as by cytosolic Ca(2+). Its function is as follows. Selectively hydrolyzes arachidonyl phospholipids in the sn-2 position releasing arachidonic acid. Together with its lysophospholipid activity, it is implicated in the initiation of the inflammatory response. The protein is Cytosolic phospholipase A2 (PLA2G4A) of Gallus gallus (Chicken).